The chain runs to 282 residues: Pantothenate synthetase (282 aa).

30-37 (MGFLHDGH) lines the ATP pocket. Residue H37 is the Proton donor of the active site. Residue Q60 coordinates (R)-pantoate. Q60 is a binding site for beta-alanine. Position 146–149 (146–149 (GQKD)) interacts with ATP. Q152 contributes to the (R)-pantoate binding site. ATP is bound by residues I175 and 183-186 (KSSR).

The protein belongs to the pantothenate synthetase family. As to quaternary structure, homodimer.

The protein resides in the cytoplasm. The enzyme catalyses (R)-pantoate + beta-alanine + ATP = (R)-pantothenate + AMP + diphosphate + H(+). It participates in cofactor biosynthesis; (R)-pantothenate biosynthesis; (R)-pantothenate from (R)-pantoate and beta-alanine: step 1/1. Its function is as follows. Catalyzes the condensation of pantoate with beta-alanine in an ATP-dependent reaction via a pantoyl-adenylate intermediate. The chain is Pantothenate synthetase from Campylobacter jejuni subsp. jejuni serotype O:6 (strain 81116 / NCTC 11828).